Consider the following 606-residue polypeptide: Pentatricopeptide repeat-containing protein At1g31920 (606 aa).

PPR repeat units follow at residues 96 to 130 (CTFD…GNEP), 131 to 165 (DNFT…GLEA), 166 to 200 (DVFV…TAAS), 201 to 227 (WSSM…MCSE), 233 to 263 (EESG…LLRN), 268 to 298 (NIIV…MEKR), 299 to 333 (NNLT…GLEP), 334 to 368 (DHVV…GKVE), and 370 to 404 (TAEH…KNDV). The interval 405-480 (IWRTFLSQCR…TPGFSIVELK (76 aa)) is type E motif. The tract at residues 481 to 511 (GKTHRFVSQDRSHPKCKEIYKMLHQMEWQLK) is type E(+) motif. Residues 512–606 (FEGYSPDLTQ…GGTCSCKDYW (95 aa)) form a type DYW motif region.

This sequence belongs to the PPR family. PCMP-H subfamily.

The polypeptide is Pentatricopeptide repeat-containing protein At1g31920 (PCMP-H11) (Arabidopsis thaliana (Mouse-ear cress)).